The following is a 223-amino-acid chain: Uridylate kinase (223 aa).

9 to 10 (GS) is an ATP binding site. Glycine 43 contributes to the UMP binding site. The ATP site is built by glycine 44 and arginine 48. Residues aspartate 65 and 112 to 118 (THPGHTT) each bind UMP. Residues threonine 137, asparagine 138, tyrosine 143, and aspartate 146 each coordinate ATP.

It belongs to the UMP kinase family. As to quaternary structure, homohexamer.

The protein resides in the cytoplasm. The catalysed reaction is UMP + ATP = UDP + ADP. Its pathway is pyrimidine metabolism; CTP biosynthesis via de novo pathway; UDP from UMP (UMPK route): step 1/1. Its activity is regulated as follows. Inhibited by UTP. Functionally, catalyzes the reversible phosphorylation of UMP to UDP. This is Uridylate kinase from Methanopyrus kandleri (strain AV19 / DSM 6324 / JCM 9639 / NBRC 100938).